A 521-amino-acid chain; its full sequence is Bacillolysin (521 aa).

The first 27 residues, 1–27, serve as a signal peptide directing secretion; that stretch reads MGLGKKLSVAVAASFMSLTISLPGVQA. The propeptide at 28-221 is activation peptide; sequence AENPQLKENL…ILKKQNKVEH (194 aa). Residues Gln-283 and Asp-360 each contribute to the Ca(2+) site. Position 364 (His-364) interacts with Zn(2+). The active site involves Glu-365. The Zn(2+) site is built by His-368 and Glu-388. 5 residues coordinate Ca(2+): Asp-399, Asp-402, Asp-404, Glu-407, and Val-411. Residue His-449 is the Proton donor of the active site.

The protein belongs to the peptidase M4 family. It depends on Ca(2+) as a cofactor. Zn(2+) is required as a cofactor.

The protein resides in the secreted. The enzyme catalyses Similar, but not identical, to that of thermolysin.. In terms of biological role, extracellular zinc metalloprotease. This Bacillus amyloliquefaciens (Bacillus velezensis) protein is Bacillolysin (npr).